The primary structure comprises 1032 residues: Putative oxidoreductase YgfK (1032 aa).

Residues 928–958 (RFQTLHLDAYCNECGNCAQFCPWNGKPYKDK) enclose the 4Fe-4S ferredoxin-type domain. [4Fe-4S] cluster contacts are provided by C938, C941, C944, and C948.

It depends on [4Fe-4S] cluster as a cofactor.

Could be an iron-sulfur flavoprotein with NADPH:O(2) oxidoreductase activity. The chain is Putative oxidoreductase YgfK (ygfK) from Escherichia coli (strain K12).